A 101-amino-acid polypeptide reads, in one-letter code: NAD(P)H-quinone oxidoreductase subunit 4L, chloroplastic (101 aa).

3 helical membrane-spanning segments follow: residues 2–22 (ILEHVLVLSAYLFLIGLYGLI), 32–52 (MCLELILNAVNMNFVTFSDFF), and 61–81 (IFCIFVIAIAAAEAAIGLAIV).

The protein belongs to the complex I subunit 4L family. As to quaternary structure, NDH is composed of at least 16 different subunits, 5 of which are encoded in the nucleus.

It is found in the plastid. It localises to the chloroplast thylakoid membrane. It catalyses the reaction a plastoquinone + NADH + (n+1) H(+)(in) = a plastoquinol + NAD(+) + n H(+)(out). It carries out the reaction a plastoquinone + NADPH + (n+1) H(+)(in) = a plastoquinol + NADP(+) + n H(+)(out). Its function is as follows. NDH shuttles electrons from NAD(P)H:plastoquinone, via FMN and iron-sulfur (Fe-S) centers, to quinones in the photosynthetic chain and possibly in a chloroplast respiratory chain. The immediate electron acceptor for the enzyme in this species is believed to be plastoquinone. Couples the redox reaction to proton translocation, and thus conserves the redox energy in a proton gradient. The chain is NAD(P)H-quinone oxidoreductase subunit 4L, chloroplastic from Crucihimalaya wallichii (Rock-cress).